The chain runs to 422 residues: S-adenosylmethionine synthase (422 aa).

An ATP-binding site is contributed by His-15. Asp-17 lines the Mg(2+) pocket. Glu-43 is a K(+) binding site. L-methionine is bound by residues Glu-56 and Gln-99. Residues 99–109 are flexible loop; the sequence is QSPDISRGVTE. ATP is bound by residues 166-168, 232-233, Asp-241, 247-248, Ala-264, and Lys-268; these read DGK, RF, and RK. Residue Asp-241 participates in L-methionine binding. Lys-272 is an L-methionine binding site. The interval 390-422 is disordered; it reads AVPATTNGAGSKNGSGSKKEPKRKGKKETGAQA.

It belongs to the AdoMet synthase family. In terms of assembly, homotetramer; dimer of dimers. Mg(2+) is required as a cofactor. Requires K(+) as cofactor.

The protein localises to the cytoplasm. It carries out the reaction L-methionine + ATP + H2O = S-adenosyl-L-methionine + phosphate + diphosphate. Its pathway is amino-acid biosynthesis; S-adenosyl-L-methionine biosynthesis; S-adenosyl-L-methionine from L-methionine: step 1/1. Functionally, catalyzes the formation of S-adenosylmethionine (AdoMet) from methionine and ATP. The overall synthetic reaction is composed of two sequential steps, AdoMet formation and the subsequent tripolyphosphate hydrolysis which occurs prior to release of AdoMet from the enzyme. This is S-adenosylmethionine synthase from Sorangium cellulosum (strain So ce56) (Polyangium cellulosum (strain So ce56)).